A 601-amino-acid chain; its full sequence is Elongation factor 4 (601 aa).

Residues 7–189 (DTIRNFSIVA…AIVAKLPPPK (183 aa)) form the tr-type G domain. GTP-binding positions include 19 to 24 (DHGKST) and 136 to 139 (NKID).

The protein belongs to the TRAFAC class translation factor GTPase superfamily. Classic translation factor GTPase family. LepA subfamily.

The protein resides in the cell inner membrane. The enzyme catalyses GTP + H2O = GDP + phosphate + H(+). In terms of biological role, required for accurate and efficient protein synthesis under certain stress conditions. May act as a fidelity factor of the translation reaction, by catalyzing a one-codon backward translocation of tRNAs on improperly translocated ribosomes. Back-translocation proceeds from a post-translocation (POST) complex to a pre-translocation (PRE) complex, thus giving elongation factor G a second chance to translocate the tRNAs correctly. Binds to ribosomes in a GTP-dependent manner. This Methylobacterium nodulans (strain LMG 21967 / CNCM I-2342 / ORS 2060) protein is Elongation factor 4.